Reading from the N-terminus, the 432-residue chain is Isocitrate lyase (432 aa).

The segment at 1–24 (MSNVGKPRTAQEIQQDWDTNPRWN) is disordered. A compositionally biased stretch (polar residues) spans 11-22 (QEIQQDWDTNPR). 93 to 95 (SGW) contributes to the substrate binding site. Asp-155 is a Mg(2+) binding site. The active-site Proton acceptor is the Cys-193. Substrate-binding positions include 194–195 (GH), Arg-230, 315–319 (NCSPS), and Thr-349.

Belongs to the isocitrate lyase/PEP mutase superfamily. Isocitrate lyase family. In terms of assembly, homotetramer. The cofactor is Mg(2+).

The catalysed reaction is D-threo-isocitrate = glyoxylate + succinate. It functions in the pathway carbohydrate metabolism; glyoxylate cycle; (S)-malate from isocitrate: step 1/2. Inhibited by 3-phosphoglycerate, 6-phosphogluconate, phosphoenolpyruvate (PEP), fructose 1,6-bisphosphate, glycolate, oxalate, and itaconate. In terms of biological role, involved in the metabolic adaptation in response to environmental changes. Catalyzes the reversible formation of succinate and glyoxylate from isocitrate, a key step of the glyoxylate cycle, which operates as an anaplerotic route for replenishing the tricarboxylic acid cycle during growth on fatty acid substrates. This Corynebacterium glutamicum (strain ATCC 13032 / DSM 20300 / JCM 1318 / BCRC 11384 / CCUG 27702 / LMG 3730 / NBRC 12168 / NCIMB 10025 / NRRL B-2784 / 534) protein is Isocitrate lyase.